The chain runs to 320 residues: Delta(7)-sterol 5(6)-desaturase erg3C (320 aa).

Helical transmembrane passes span 43-63, 91-111, and 127-147; these read VISILVLTQLGATSLYLFFSA, SSLSAIPFINILTLPWFLAEV, and PWLVVSSILYMAFNDIGIYWI. Residues 134–283 enclose the Fatty acid hydroxylase domain; that stretch reads ILYMAFNDIG…FTWADAYFGS (150 aa). The Histidine box-1 motif lies at 148 to 152; sequence HRLEH. Positions 161–165 match the Histidine box-2 motif; sequence HKPHH. A helical transmembrane segment spans residues 224–244; it reads YMVLFAAVQIWTILIHDGDMI. Residues 259–263 carry the Histidine box-3 motif; sequence HTLHH.

It belongs to the sterol desaturase family. It depends on Fe cation as a cofactor.

It localises to the endoplasmic reticulum membrane. Functionally, delta(7)-sterol 5(6)-desaturase; part of the third module of ergosterol biosynthesis pathway that includes the late steps of the pathway. Erg3C is a minor delta(7)-sterol 5(6)-desaturase within the ergosterol pathway, erg3B being the major one. The third module or late pathway involves the ergosterol synthesis itself through consecutive reactions that mainly occur in the endoplasmic reticulum (ER) membrane. Firstly, the squalene synthase erg9 catalyzes the condensation of 2 farnesyl pyrophosphate moieties to form squalene, which is the precursor of all steroids. Squalene synthase is crucial for balancing the incorporation of farnesyl diphosphate (FPP) into sterol and nonsterol isoprene synthesis. Secondly, squalene is converted into lanosterol by the consecutive action of the squalene epoxidase erg1 and the lanosterol synthase erg7. Then, the delta(24)-sterol C-methyltransferase erg6 methylates lanosterol at C-24 to produce eburicol. Eburicol is the substrate of the sterol 14-alpha demethylase encoded by cyp51A and cyp51B, to yield 4,4,24-trimethyl ergosta-8,14,24(28)-trienol. The C-14 reductase erg24 then reduces the C14=C15 double bond which leads to 4,4-dimethylfecosterol. A sequence of further demethylations at C-4, involving the C-4 demethylation complex containing the C-4 methylsterol oxidases erg25A or erg25B, the sterol-4-alpha-carboxylate 3-dehydrogenase erg26 and the 3-keto-steroid reductase erg27, leads to the production of fecosterol via 4-methylfecosterol. The C-8 sterol isomerase erg2 then catalyzes the reaction which results in unsaturation at C-7 in the B ring of sterols and thus converts fecosterol to episterol. The sterol-C5-desaturase erg3B then catalyzes the introduction of a C-5 double bond in the B ring to produce 5-dehydroepisterol. The 2 other sterol-C5-desaturases, erg3A and erg3C, seem to be less important in ergosterol biosynthesis. The C-22 sterol desaturase erg5 further converts 5-dehydroepisterol into ergosta-5,7,22,24(28)-tetraen-3beta-ol by forming the C-22(23) double bond in the sterol side chain. Finally, ergosta-5,7,22,24(28)-tetraen-3beta-ol is substrate of the C-24(28) sterol reductases erg4A and erg4B to produce ergosterol. Possible alternative sterol biosynthetic pathways might exist from fecosterol to ergosterol, depending on the activities of the erg3 isoforms. In Aspergillus fumigatus (strain ATCC MYA-4609 / CBS 101355 / FGSC A1100 / Af293) (Neosartorya fumigata), this protein is Delta(7)-sterol 5(6)-desaturase erg3C.